We begin with the raw amino-acid sequence, 693 residues long: Ion-translocating oxidoreductase complex subunit C (693 aa).

4Fe-4S ferredoxin-type domains are found at residues 368-397 (MEPV…QQLY) and 407-436 (KARD…VQYY). [4Fe-4S] cluster is bound by residues Cys-377, Cys-380, Cys-383, Cys-387, Cys-416, Cys-419, Cys-422, and Cys-426. Residues 539-548 (REERVREKQS) are compositionally biased toward basic and acidic residues. The interval 539 to 564 (REERVREKQSQQETPATEVTPEELDP) is disordered.

It belongs to the 4Fe4S bacterial-type ferredoxin family. RnfC subfamily. In terms of assembly, the complex is composed of six subunits: RnfA, RnfB, RnfC, RnfD, RnfE and RnfG. It depends on [4Fe-4S] cluster as a cofactor.

The protein resides in the cell inner membrane. Its function is as follows. Part of a membrane-bound complex that couples electron transfer with translocation of ions across the membrane. This Pectobacterium atrosepticum (strain SCRI 1043 / ATCC BAA-672) (Erwinia carotovora subsp. atroseptica) protein is Ion-translocating oxidoreductase complex subunit C.